The sequence spans 316 residues: BRCA2 and CDKN1A-interacting protein (316 aa).

Residues 1 to 57 (MASKAKKRAVGNGIQRPLGAPGQREEEEEEEDEVEDEEEDEDDSDEEEDEVDEIVDE) are disordered. The segment covering 25–57 (EEEEEEEDEVEDEEEDEDDSDEEEDEVDEIVDE) has biased composition (acidic residues). A phosphoserine mark is found at S44 and S114. Residues 61-169 (IEFEAYSISD…EQSMVEQLDK (109 aa)) form an interaction with BRCA2 region. The interval 163–261 (MVEQLDKLLN…NAEEEFFYEK (99 aa)) is interaction with CDKN1A. Position 283 is a phosphoserine (S283).

Belongs to the BCP1 family. As to quaternary structure, interacts with BRCA2, CDKN1A and MTDH/LYRIC. Interacts with DCTN1/p150-glued and ACTR1A/ARP1. Interacts with alpha-, beta- and gamma-tubulins. Interacts with TENT5C; the interaction has no effect on TENT5C poly(A) polymerase function. In terms of tissue distribution, expressed in the testes (at protein level).

It localises to the nucleus. The protein localises to the cytoplasm. The protein resides in the cytoskeleton. Its subcellular location is the microtubule organizing center. It is found in the centrosome. It localises to the centriole. The protein localises to the spindle pole. Functionally, during interphase, required for microtubule organizing and anchoring activities. During mitosis, required for the organization and stabilization of the spindle pole. May promote cell cycle arrest by enhancing the inhibition of CDK2 activity by CDKN1A. May be required for repair of DNA damage by homologous recombination in conjunction with BRCA2. May not be involved in non-homologous end joining (NHEJ). The chain is BRCA2 and CDKN1A-interacting protein (Bccip) from Mus musculus (Mouse).